Consider the following 188-residue polypeptide: Peptidyl-tRNA hydrolase (188 aa).

Position 15 (Phe15) interacts with tRNA. The Proton acceptor role is filled by His20. TRNA is bound by residues Tyr64, Asn66, and Asn112.

This sequence belongs to the PTH family. Monomer.

It is found in the cytoplasm. The enzyme catalyses an N-acyl-L-alpha-aminoacyl-tRNA + H2O = an N-acyl-L-amino acid + a tRNA + H(+). Hydrolyzes ribosome-free peptidyl-tRNAs (with 1 or more amino acids incorporated), which drop off the ribosome during protein synthesis, or as a result of ribosome stalling. Functionally, catalyzes the release of premature peptidyl moieties from peptidyl-tRNA molecules trapped in stalled 50S ribosomal subunits, and thus maintains levels of free tRNAs and 50S ribosomes. The sequence is that of Peptidyl-tRNA hydrolase from Borreliella afzelii (strain PKo) (Borrelia afzelii).